The sequence spans 225 residues: Glucosyl-3-phosphoglycerate phosphatase (225 aa).

Residue arginine 10 participates in substrate binding. Histidine 11 functions as the Tele-phosphohistidine intermediate in the catalytic mechanism. Arginine 60 contacts substrate. Glutamate 84 functions as the Proton donor/acceptor in the catalytic mechanism. Residue histidine 158 participates in substrate binding.

The protein belongs to the phosphoglycerate mutase family. In terms of assembly, homodimer.

The enzyme catalyses (2R)-2-O-(alpha-D-glucopyranosyl)-3-phospho-glycerate + H2O = (2R)-2-O-(alpha-D-glucopyranosyl)-glycerate + phosphate. In terms of biological role, involved in the biosynthesis of mycobacterial methylglucose lipopolysaccharides (MGLP). Catalyzes the dephosphorylation of glucosyl-3-phosphoglycerate (GPG) to glucosylglycerate. The sequence is that of Glucosyl-3-phosphoglycerate phosphatase from Mycolicibacterium vanbaalenii (strain DSM 7251 / JCM 13017 / BCRC 16820 / KCTC 9966 / NRRL B-24157 / PYR-1) (Mycobacterium vanbaalenii).